A 118-amino-acid polypeptide reads, in one-letter code: Basic phospholipase A2 4 (118 aa).

7 cysteine pairs are disulfide-bonded: Cys-11–Cys-71, Cys-27–Cys-117, Cys-29–Cys-45, Cys-44–Cys-98, Cys-51–Cys-91, Cys-60–Cys-84, and Cys-78–Cys-89. Residues Tyr-28, Gly-30, and Gly-32 each contribute to the Ca(2+) site. Residue His-48 is part of the active site. Asp-49 contributes to the Ca(2+) binding site. Residue Asp-92 is part of the active site.

This sequence belongs to the phospholipase A2 family. Group I subfamily. D49 sub-subfamily. As to quaternary structure, monomer. The cofactor is Ca(2+). In terms of tissue distribution, expressed by the venom gland.

Its subcellular location is the secreted. It catalyses the reaction a 1,2-diacyl-sn-glycero-3-phosphocholine + H2O = a 1-acyl-sn-glycero-3-phosphocholine + a fatty acid + H(+). PLA2 catalyzes the calcium-dependent hydrolysis of the 2-acyl groups in 3-sn-phosphoglycerides. The polypeptide is Basic phospholipase A2 4 (Laticauda semifasciata (Black-banded sea krait)).